Consider the following 637-residue polypeptide: Chaperone protein HtpG (637 aa).

The a; substrate-binding stretch occupies residues Met1–Arg345. Residues Glu346–Lys562 are b. The c stretch occupies residues Leu563–Lys637.

It belongs to the heat shock protein 90 family. Homodimer.

It is found in the cytoplasm. Functionally, molecular chaperone. Has ATPase activity. This is Chaperone protein HtpG from Shewanella sp. (strain MR-4).